Reading from the N-terminus, the 815-residue chain is Leucine--tRNA ligase (815 aa).

The 'HIGH' region motif lies at 42–52; that stretch reads PYPSGRLHMGH. The 'KMSKS' region motif lies at 574-578; that stretch reads KMSKS. Residue lysine 577 participates in ATP binding.

Belongs to the class-I aminoacyl-tRNA synthetase family.

It localises to the cytoplasm. The enzyme catalyses tRNA(Leu) + L-leucine + ATP = L-leucyl-tRNA(Leu) + AMP + diphosphate. The chain is Leucine--tRNA ligase from Marinomonas sp. (strain MWYL1).